The sequence spans 288 residues: HTH-type transcriptional regulator CzcR (288 aa).

Residues 1–58 form the HTH lysR-type domain; sequence MELRDLQIFQSVADQGSVSSAAKELNYVQSNVTTRIKQLENELKTPLFYRHKRGMTLT. A DNA-binding region (H-T-H motif) is located at residues 18–37; sequence VSSAAKELNYVQSNVTTRIK.

It belongs to the LysR transcriptional regulatory family.

This Bacillus thuringiensis subsp. konkukian (strain 97-27) protein is HTH-type transcriptional regulator CzcR (czcR).